Reading from the N-terminus, the 101-residue chain is Movement protein (101 aa).

A helical membrane pass occupies residues Glu30–Leu50. The disordered stretch occupies residues Val75–Gly101.

Belongs to the mastrevirus movement protein family. In terms of assembly, interacts with the capsid protein (CP). Part of a MP-CP-viral DNA complex.

It is found in the host membrane. In terms of biological role, involved in the viral transport within, and between cells. This chain is Movement protein, found in Maize streak virus genotype A (isolate South Africa) (MSV).